The sequence spans 237 residues: Uridylate kinase (237 aa).

12-15 (KLSG) contacts ATP. Positions 20 to 25 (GDEGFG) are involved in allosteric activation by GTP. A UMP-binding site is contributed by G54. ATP contacts are provided by G55 and R59. UMP contacts are provided by residues D74 and 135-142 (TGSPFFTT). 3 residues coordinate ATP: T162, Y168, and D171.

The protein belongs to the UMP kinase family. As to quaternary structure, homohexamer.

It is found in the cytoplasm. The catalysed reaction is UMP + ATP = UDP + ADP. The protein operates within pyrimidine metabolism; CTP biosynthesis via de novo pathway; UDP from UMP (UMPK route): step 1/1. With respect to regulation, allosterically activated by GTP. Inhibited by UTP. In terms of biological role, catalyzes the reversible phosphorylation of UMP to UDP. The protein is Uridylate kinase of Haemophilus ducreyi (strain 35000HP / ATCC 700724).